The following is an 85-amino-acid chain: Putative membrane protein insertion efficiency factor (85 aa).

This sequence belongs to the UPF0161 family.

Its subcellular location is the cell inner membrane. Its function is as follows. Could be involved in insertion of integral membrane proteins into the membrane. This chain is Putative membrane protein insertion efficiency factor, found in Dictyoglomus thermophilum (strain ATCC 35947 / DSM 3960 / H-6-12).